Reading from the N-terminus, the 286-residue chain is NADP-dependent dehydrogenase clz5 (286 aa).

NADP(+) contacts are provided by S49, L51, D93, Y207, K211, I241, and Q245. Y207 serves as the catalytic Proton acceptor. Y207 (proton donor) is an active-site residue. The active-site Lowers pKa of active site Tyr is K211.

The protein belongs to the short-chain dehydrogenases/reductases (SDR) family. As to quaternary structure, homodimer.

It is found in the cytoplasm. The protein localises to the cytosol. Its pathway is secondary metabolite biosynthesis. Functionally, NADP-dependent dehydrogenase; part of the gene cluster that mediates the biosynthesis of squalestatin S1 (SQS1, also known as zaragozic acid A), a heavily oxidized fungal polyketide that offers potent cholesterol lowering activity by targeting squalene synthase (SS). SQS1 is composed of a 2,8-dioxobicyclic[3.2.1]octane-3,4,5-tricarboxyclic acid core that is connected to two lipophilic polyketide arms. These initial steps feature the priming of an unusual benzoic acid starter unit onto the highly reducing polyketide synthase clz14, followed by oxaloacetate extension and product release to generate a tricarboxylic acid containing product. The phenylalanine ammonia lyase (PAL) clz10 and the acyl-CoA ligase clz12 are involved in transforming phenylalanine into benzoyl-CoA. The citrate synthase-like protein clz17 is involved in connecting the C-alpha-carbons of the hexaketide chain and oxaloacetate to afford the tricarboxylic acid unit. The potential hydrolytic enzymes, clz11 and clz13, are in close proximity to pks2 and may participate in product release. On the other side, the tetraketide arm is synthesized by a the squalestatin tetraketide synthase clz2 and enzymatically esterified to the core in the last biosynthetic step, by the acetyltransferase clz6. The biosynthesis of the tetraketide must involve 3 rounds of chain extension. After the first and second rounds methyl-transfer occurs, and in all rounds of extension the ketoreductase and dehydratase are active. The enoyl reductase and C-MeT of clz2 are not active in the final round of extension. The acetyltransferase clz6 appears to have a broad substrate selectivity for its acyl CoA substrate, allowing the in vitro synthesis of novel squalestatins. The biosynthesis of SQS1 requires several oxidative steps likely performed by oxidoreductases clz3, clz15 and clz16. Finally, in support of the identification of the cluster as being responsible for SQS1 production, the cluster contains a gene encoding a putative squalene synthase (SS) clz20, suggesting a likely mechanism for self-resistance. This Cochliobolus lunatus (Filamentous fungus) protein is NADP-dependent dehydrogenase clz5.